Reading from the N-terminus, the 56-residue chain is Large ribosomal subunit protein bL33 (56 aa).

Belongs to the bacterial ribosomal protein bL33 family.

The sequence is that of Large ribosomal subunit protein bL33 from Actinobacillus succinogenes (strain ATCC 55618 / DSM 22257 / CCUG 43843 / 130Z).